A 344-amino-acid polypeptide reads, in one-letter code: Selenide, water dikinase (344 aa).

The active site involves cysteine 16. ATP-binding positions include lysine 19 and 47 to 49; that span reads SRD. Residue aspartate 50 coordinates Mg(2+). Residues aspartate 67, aspartate 90, and 138–140 contribute to the ATP site; that span reads GHS. Aspartate 90 is a binding site for Mg(2+). A Mg(2+)-binding site is contributed by aspartate 226.

The protein belongs to the selenophosphate synthase 1 family. Class I subfamily. As to quaternary structure, homodimer. The cofactor is Mg(2+).

It carries out the reaction hydrogenselenide + ATP + H2O = selenophosphate + AMP + phosphate + 2 H(+). Its function is as follows. Synthesizes selenophosphate from selenide and ATP. The sequence is that of Selenide, water dikinase from Bordetella bronchiseptica (strain ATCC BAA-588 / NCTC 13252 / RB50) (Alcaligenes bronchisepticus).